The chain runs to 621 residues: Chaperone protein HtpG (621 aa).

The segment at 1-328 is a; substrate-binding; the sequence is MTQEKKKFDA…SEDLPLNISR (328 aa). The segment at 329 to 544 is b; the sequence is ESLQHNNVLE…DTAMDIRMER (216 aa). Residues 545–621 form a c region; it reads FLIEQKQIAN…LNDILQKAIL (77 aa).

It belongs to the heat shock protein 90 family. Homodimer.

It is found in the cytoplasm. Functionally, molecular chaperone. Has ATPase activity. In Rickettsia prowazekii (strain Madrid E), this protein is Chaperone protein HtpG.